The primary structure comprises 709 residues: ATP-dependent RNA helicase dbp7 (709 aa).

Positions 13 to 90 (DNAQSRKPEA…KPAHELKGNK (78 aa)) are disordered. Residues 16-34 (QSRKPEALKSSRRWTDRAR) are compositionally biased toward basic and acidic residues. Over residues 44 to 65 (NESSKSTVKRNSGTNGASTDYK) the composition is skewed to polar residues. Over residues 66–90 (NSQKEKVINPVFDPRKPAHELKGNK) the composition is skewed to basic and acidic residues. A Q motif motif is present at residues 138–167 (TNFAGVQLDTQLADHLNNKMNISAPTAIQS). The Helicase ATP-binding domain maps to 172–366 (ALLNTDDKDA…DSALKDALYL (195 aa)). ATP is bound at residue 185–192 (AQTGSGKT). The DEAD box signature appears at 301 to 304 (DEGD). The region spanning 404 to 580 (LLRSHVRSYK…EQPNGPSGLL (177 aa)) is the Helicase C-terminal domain. The interval 662 to 690 (GKISGANSSKPRKQGGSVDKGKSKSSKDI) is disordered.

The protein belongs to the DEAD box helicase family. DDX31/DBP7 subfamily.

It is found in the nucleus. Its subcellular location is the nucleolus. The catalysed reaction is ATP + H2O = ADP + phosphate + H(+). In terms of biological role, ATP-binding RNA helicase involved in the biogenesis of 60S ribosomal subunits and is required for the normal formation of 25S and 5.8S rRNAs. The chain is ATP-dependent RNA helicase dbp7 (dbp7) from Schizosaccharomyces pombe (strain 972 / ATCC 24843) (Fission yeast).